A 652-amino-acid polypeptide reads, in one-letter code: Thioredoxin reductase 3 (652 aa).

Residues 1–12 (MEKPPSPPPPPR) show a composition bias toward pro residues. Residues 1 to 62 (MEKPPSPPPP…TSRPSSEARE (62 aa)) form a disordered region. At Arg-34 the chain carries Asymmetric dimethylarginine; alternate. Arg-34 bears the Omega-N-methylarginine; alternate mark. Phosphoserine is present on Ser-50. A Glutaredoxin domain is found at 65–165 (RRRLRDLIEG…KLLQDDSAHD (101 aa)). 167–196 (DLIIIGGGSGGLSCAKEAANLGKKVMVLDF) provides a ligand contact to FAD. The cysteines at positions 212 and 217 are disulfide-linked. N6-succinyllysine is present on Lys-388. The active-site Proton acceptor is His-625. The segment at residues 650–651 (CU) is a cross-link (cysteinyl-selenocysteine (Cys-Sec)). Sec-651 is a non-standard amino acid (selenocysteine).

This sequence belongs to the class-I pyridine nucleotide-disulfide oxidoreductase family. Homodimer. FAD serves as cofactor. In terms of tissue distribution, expressed preferentially in testis where it is found in spermatids and spermatocytes but not in sperm. In elongating spermatids, expressed at the site of mitochondrial sheath formation. Low levels in other tissues including heart, lung, liver, kidney, brain, muscle and prostate.

The protein resides in the cytoplasm. It is found in the nucleus. It localises to the microsome. The protein localises to the endoplasmic reticulum. It catalyses the reaction [thioredoxin]-dithiol + NADP(+) = [thioredoxin]-disulfide + NADPH + H(+). Functionally, displays thioredoxin reductase, glutaredoxin and glutathione reductase activities. Catalyzes disulfide bond isomerization. Promotes disulfide bond formation between GPX4 and various sperm proteins and may play a role in sperm maturation by promoting formation of sperm structural components. The protein is Thioredoxin reductase 3 of Mus musculus (Mouse).